The following is a 147-amino-acid chain: uncharacterized protein (147 aa).

This is an uncharacterized protein from Bacillus subtilis (strain 168).